The following is a 1361-amino-acid chain: DNA-directed RNA polymerase subunit beta (1361 aa).

The protein belongs to the RNA polymerase beta chain family. As to quaternary structure, the RNAP catalytic core consists of 2 alpha, 1 beta, 1 beta' and 1 omega subunit. When a sigma factor is associated with the core the holoenzyme is formed, which can initiate transcription.

The enzyme catalyses RNA(n) + a ribonucleoside 5'-triphosphate = RNA(n+1) + diphosphate. In terms of biological role, DNA-dependent RNA polymerase catalyzes the transcription of DNA into RNA using the four ribonucleoside triphosphates as substrates. The protein is DNA-directed RNA polymerase subunit beta of Cellvibrio japonicus (strain Ueda107) (Pseudomonas fluorescens subsp. cellulosa).